The primary structure comprises 311 residues: Splicing factor spf30 (311 aa).

Residues D76–E139 enclose the Tudor domain. 2 disordered regions span residues R154–S183 and S276–S311. Polar residues predominate over residues A168–S183. S173 bears the Phosphoserine mark. A compositionally biased stretch (basic and acidic residues) spans H301–S311.

Belongs to the SMN family. Associates with spliceosomes.

It is found in the nucleus. Its function is as follows. Involved in spliceosome assembly. This Schizosaccharomyces pombe (strain 972 / ATCC 24843) (Fission yeast) protein is Splicing factor spf30 (spf30).